We begin with the raw amino-acid sequence, 447 residues long: Glutamate--tRNA ligase 1 (447 aa).

The 'HIGH' region motif lies at 10–20 (PSPTGMLHVGN). The 'KMSKS' region signature appears at 240–244 (KISKR). Residue Lys243 participates in ATP binding.

The protein belongs to the class-I aminoacyl-tRNA synthetase family. Glutamate--tRNA ligase type 1 subfamily. As to quaternary structure, monomer.

It localises to the cytoplasm. The catalysed reaction is tRNA(Glu) + L-glutamate + ATP = L-glutamyl-tRNA(Glu) + AMP + diphosphate. Functionally, catalyzes the attachment of glutamate to tRNA(Glu) in a two-step reaction: glutamate is first activated by ATP to form Glu-AMP and then transferred to the acceptor end of tRNA(Glu). The chain is Glutamate--tRNA ligase 1 from Rickettsia conorii (strain ATCC VR-613 / Malish 7).